The chain runs to 444 residues: Glutamyl-tRNA reductase (444 aa).

Substrate is bound by residues 49 to 52 (TCNR), Ser-109, 114 to 116 (ETQ), and Gln-120. The active-site Nucleophile is the Cys-50. 189 to 194 (GAGKMG) provides a ligand contact to NADP(+).

This sequence belongs to the glutamyl-tRNA reductase family. As to quaternary structure, homodimer.

The catalysed reaction is (S)-4-amino-5-oxopentanoate + tRNA(Glu) + NADP(+) = L-glutamyl-tRNA(Glu) + NADPH + H(+). The protein operates within porphyrin-containing compound metabolism; protoporphyrin-IX biosynthesis; 5-aminolevulinate from L-glutamyl-tRNA(Glu): step 1/2. In terms of biological role, catalyzes the NADPH-dependent reduction of glutamyl-tRNA(Glu) to glutamate 1-semialdehyde (GSA). The protein is Glutamyl-tRNA reductase of Bacillus cereus (strain G9842).